The following is a 198-amino-acid chain: CASP-like protein 2B1 (198 aa).

The Cytoplasmic portion of the chain corresponds to 1 to 12 (MAAAMGLERKAK). A helical transmembrane segment spans residues 13–33 (VAEVALRCAVCALAALAAALV). Residues 34–55 (GTGSQTRTFFSLEKKARFTDMK) lie on the Extracellular side of the membrane. Residues 56–76 (ALVLLVAAHGAAAVYSLLQLA) traverse the membrane as a helical segment. Over 77 to 91 (RCAAAAAWKGGSNGG) the chain is Cytoplasmic. Residues 92 to 112 (AAVVAWSVFSCDQAVAYALMA) form a helical membrane-spanning segment. At 113–149 (ATAAALQSSVVGKRGQPELQWMPVCGLYGAFCRRVGE) the chain is on the extracellular side. Residues 150–170 (GLAAAVAAGLAAVLLAAVSAF) traverse the membrane as a helical segment. Residues 171–198 (NLFRLYGGGGGGRKSSAGAVSGNGANTW) are Cytoplasmic-facing.

The protein belongs to the Casparian strip membrane proteins (CASP) family. As to quaternary structure, homodimer and heterodimers.

It localises to the cell membrane. This Oryza sativa subsp. japonica (Rice) protein is CASP-like protein 2B1.